We begin with the raw amino-acid sequence, 292 residues long: Ventral anterior homeobox 2 (292 aa).

The span at methionine 1–alanine 36 shows a compositional bias: basic and acidic residues. The segment at methionine 1–aspartate 74 is disordered. Over residues threonine 38–alanine 55 the composition is skewed to polar residues. Residues proline 102 to glutamine 161 constitute a DNA-binding region (homeobox). Residues alanine 212–leucine 241 are disordered.

It belongs to the EMX homeobox family.

It localises to the nucleus. In terms of biological role, transcription factor that may function in dorsoventral specification of the forebrain. Regulates the expression of Wnt signaling antagonists including the expression of a truncated TCF7L2 isoform that cannot bind CTNNB1 and acts therefore as a potent dominant-negative Wnt antagonist. Plays a crucial role in eye development and, in particular, in the specification of the ventral optic vesicle. May be a regulator of axial polarization in the retina. The protein is Ventral anterior homeobox 2 (Vax2) of Rattus norvegicus (Rat).